Here is a 314-residue protein sequence, read N- to C-terminus: Ribosomal RNA small subunit methyltransferase H (314 aa).

S-adenosyl-L-methionine is bound by residues 37–39, Asp-57, Phe-83, Asp-105, and Gln-112; that span reads GGH.

Belongs to the methyltransferase superfamily. RsmH family.

It is found in the cytoplasm. It carries out the reaction cytidine(1402) in 16S rRNA + S-adenosyl-L-methionine = N(4)-methylcytidine(1402) in 16S rRNA + S-adenosyl-L-homocysteine + H(+). Its function is as follows. Specifically methylates the N4 position of cytidine in position 1402 (C1402) of 16S rRNA. This chain is Ribosomal RNA small subunit methyltransferase H, found in Thioalkalivibrio sulfidiphilus (strain HL-EbGR7).